A 341-amino-acid chain; its full sequence is Protein FAM50A (341 aa).

2 disordered regions span residues 1 to 27 (MAQY…EREQ) and 80 to 147 (LVKE…EIEE). Positions 80-115 (LVKEREKQLAKKEQSKELQLKLEKQKEKKRKEEQKR) are enriched in basic and acidic residues. Residues 125–147 (DEGEDEEEEEEEEEEEEEDEIEE) show a composition bias toward acidic residues.

Belongs to the FAM50 family.

Its subcellular location is the nucleus. Its function is as follows. Probably involved in the regulation of pre-mRNA splicing. In Danio rerio (Zebrafish), this protein is Protein FAM50A (fam50a).